A 140-amino-acid chain; its full sequence is Large ribosomal subunit protein uL22c (140 aa).

Belongs to the universal ribosomal protein uL22 family. As to quaternary structure, part of the 50S ribosomal subunit.

Its subcellular location is the plastid. The protein resides in the chloroplast. Its function is as follows. This protein binds specifically to 23S rRNA. Functionally, the globular domain of the protein is located near the polypeptide exit tunnel on the outside of the subunit, while an extended beta-hairpin is found that lines the wall of the exit tunnel in the center of the 70S ribosome. This Calycanthus floridus var. glaucus (Eastern sweetshrub) protein is Large ribosomal subunit protein uL22c (rpl22).